Consider the following 238-residue polypeptide: N-terminal acetyltransferase A complex catalytic subunit ARD1 (238 aa).

Residues Tyr-35–Lys-195 form the N-acetyltransferase domain.

Belongs to the acetyltransferase family. ARD1 subfamily. Component of the N-terminal acetyltransferase A (NatA) complex, which is composed of ARD1, NAT1 and NAT5. Can self-associate.

The protein localises to the cytoplasm. The enzyme catalyses N-terminal glycyl-[protein] + acetyl-CoA = N-terminal N(alpha)-acetylglycyl-[protein] + CoA + H(+). It carries out the reaction N-terminal L-alanyl-[protein] + acetyl-CoA = N-terminal N(alpha)-acetyl-L-alanyl-[protein] + CoA + H(+). The catalysed reaction is N-terminal L-seryl-[protein] + acetyl-CoA = N-terminal N(alpha)-acetyl-L-seryl-[protein] + CoA + H(+). It catalyses the reaction N-terminal L-valyl-[protein] + acetyl-CoA = N-terminal N(alpha)-acetyl-L-valyl-[protein] + CoA + H(+). The enzyme catalyses N-terminal L-cysteinyl-[protein] + acetyl-CoA = N-terminal N(alpha)-acetyl-L-cysteinyl-[protein] + CoA + H(+). It carries out the reaction N-terminal L-threonyl-[protein] + acetyl-CoA = N-terminal N(alpha)-acetyl-L-threonyl-[protein] + CoA + H(+). Catalytic component of the NatA N-terminal acetyltransferase, which catalyzes acetylation of proteins beginning with Met-Ser, Met-Gly and Met-Ala. N-acetylation plays a role in normal eukaryotic translation and processing, protect against proteolytic degradation and protein turnover. This chain is N-terminal acetyltransferase A complex catalytic subunit ARD1 (ARD1), found in Saccharomyces cerevisiae (strain ATCC 204508 / S288c) (Baker's yeast).